A 233-amino-acid chain; its full sequence is Orotidine 5'-phosphate decarboxylase (233 aa).

Residues Asp11, Lys34, 61–70 (DLKLHDIPNT), Thr117, Arg179, Gln189, Gly209, and Arg210 each bind substrate. Lys63 functions as the Proton donor in the catalytic mechanism.

This sequence belongs to the OMP decarboxylase family. Type 1 subfamily. As to quaternary structure, homodimer.

The enzyme catalyses orotidine 5'-phosphate + H(+) = UMP + CO2. Its pathway is pyrimidine metabolism; UMP biosynthesis via de novo pathway; UMP from orotate: step 2/2. Catalyzes the decarboxylation of orotidine 5'-monophosphate (OMP) to uridine 5'-monophosphate (UMP). The sequence is that of Orotidine 5'-phosphate decarboxylase from Streptococcus agalactiae serotype III (strain NEM316).